A 334-amino-acid polypeptide reads, in one-letter code: ADP-L-glycero-D-manno-heptose-6-epimerase (334 aa).

NADP(+) contacts are provided by residues 11-12, 32-33, Lys-39, Lys-54, 77-81, and Asn-94; these read FI, DN, and QGACS. The active-site Proton acceptor is Tyr-141. Lys-145 contacts NADP(+). Substrate is bound at residue Asn-171. Residues Val-172 and Lys-180 each contribute to the NADP(+) site. Lys-180 (proton acceptor) is an active-site residue. Substrate-binding positions include Arg-182, His-189, 203 to 206, Arg-216, and Tyr-295; that span reads FGSN.

This sequence belongs to the NAD(P)-dependent epimerase/dehydratase family. HldD subfamily. Homopentamer. NADP(+) is required as a cofactor.

The enzyme catalyses ADP-D-glycero-beta-D-manno-heptose = ADP-L-glycero-beta-D-manno-heptose. Its pathway is nucleotide-sugar biosynthesis; ADP-L-glycero-beta-D-manno-heptose biosynthesis; ADP-L-glycero-beta-D-manno-heptose from D-glycero-beta-D-manno-heptose 7-phosphate: step 4/4. In terms of biological role, catalyzes the interconversion between ADP-D-glycero-beta-D-manno-heptose and ADP-L-glycero-beta-D-manno-heptose via an epimerization at carbon 6 of the heptose. The protein is ADP-L-glycero-D-manno-heptose-6-epimerase of Neisseria gonorrhoeae (strain ATCC 700825 / FA 1090).